A 968-amino-acid polypeptide reads, in one-letter code: RNA polymerase-associated protein RapA (968 aa).

A Helicase ATP-binding domain is found at 164-334 (DVGRRHAPRV…FARLRLLDPN (171 aa)). 177-184 (DEVGLGKT) is a binding site for ATP. A DEAH box motif is present at residues 280–283 (DEAH). The region spanning 490–662 (RVEWLMGYLT…YLAAPENTEG (173 aa)) is the Helicase C-terminal domain.

This sequence belongs to the SNF2/RAD54 helicase family. RapA subfamily. As to quaternary structure, interacts with the RNAP. Has a higher affinity for the core RNAP than for the holoenzyme. Its ATPase activity is stimulated by binding to RNAP.

In terms of biological role, transcription regulator that activates transcription by stimulating RNA polymerase (RNAP) recycling in case of stress conditions such as supercoiled DNA or high salt concentrations. Probably acts by releasing the RNAP, when it is trapped or immobilized on tightly supercoiled DNA. Does not activate transcription on linear DNA. Probably not involved in DNA repair. This is RNA polymerase-associated protein RapA from Cronobacter sakazakii (strain ATCC BAA-894) (Enterobacter sakazakii).